Here is a 393-residue protein sequence, read N- to C-terminus: NAD(P)H-quinone oxidoreductase subunit H, chloroplastic (393 aa).

The protein belongs to the complex I 49 kDa subunit family. As to quaternary structure, NDH is composed of at least 16 different subunits, 5 of which are encoded in the nucleus.

The protein resides in the plastid. Its subcellular location is the chloroplast thylakoid membrane. The catalysed reaction is a plastoquinone + NADH + (n+1) H(+)(in) = a plastoquinol + NAD(+) + n H(+)(out). It catalyses the reaction a plastoquinone + NADPH + (n+1) H(+)(in) = a plastoquinol + NADP(+) + n H(+)(out). Its function is as follows. NDH shuttles electrons from NAD(P)H:plastoquinone, via FMN and iron-sulfur (Fe-S) centers, to quinones in the photosynthetic chain and possibly in a chloroplast respiratory chain. The immediate electron acceptor for the enzyme in this species is believed to be plastoquinone. Couples the redox reaction to proton translocation, and thus conserves the redox energy in a proton gradient. This chain is NAD(P)H-quinone oxidoreductase subunit H, chloroplastic, found in Brachypodium distachyon (Purple false brome).